We begin with the raw amino-acid sequence, 512 residues long: Gamma-aminobutyric acid receptor subunit beta-2 (512 aa).

Positions 1-25 are cleaved as a signal peptide; it reads MWRVRKRGYFGIWSFPLIIAAVCAQ. Residues 26-244 lie on the Extracellular side of the membrane; the sequence is SVNDPSNMSL…SFKLKRNIGY (219 aa). N-linked (GlcNAc...) asparagine glycans are attached at residues Asn-32 and Asn-104. Position 121 (Tyr-121) interacts with histamine. Cys-160 and Cys-174 form a disulfide bridge. Residue Asn-173 is glycosylated (N-linked (GlcNAc...) asparagine). Histamine-binding positions include 180–181 and Thr-226; that span reads SY. Residues Tyr-181 and Thr-226 each contribute to the 4-aminobutanoate site. Helical transmembrane passes span 245–266, 270–292, and 304–326; these read FILQ…SFWI, ASAA…NTHL, and AIDM…YALV. The Cytoplasmic portion of the chain corresponds to 327-489; it reads NYIFFGRGPQ…DLTDVNAIDR (163 aa). The residue at position 441 (Tyr-441) is a Phosphotyrosine. A helical transmembrane segment spans residues 490–511; that stretch reads WSRIFFPVVFSFFNIVYWLYYV.

The protein belongs to the ligand-gated ion channel (TC 1.A.9) family. Gamma-aminobutyric acid receptor (TC 1.A.9.5) subfamily. GABRB2 sub-subfamily. Heteropentamer, formed by a combination of alpha (GABRA1-6), beta (GABRB1-3), gamma (GABRG1-3), delta (GABRD), epsilon (GABRE), rho (GABRR1-3), pi (GABRP) and theta (GABRQ) chains, each subunit exhibiting distinct physiological and pharmacological properties. Interacts with UBQLN1. May interact with KIF21B. Identified in a complex of 720 kDa composed of LHFPL4, NLGN2, GABRA1, GABRB2, GABRG2 and GABRB3. In terms of processing, glycosylated.

It is found in the postsynaptic cell membrane. It localises to the cell membrane. Its subcellular location is the cytoplasmic vesicle. It carries out the reaction chloride(in) = chloride(out). Its activity is regulated as follows. Allosterically activated by benzodiazepines and the anesthetic etomidate. Inhibited by the antagonist bicuculline. Potentiated by histamine. In terms of biological role, beta subunit of the heteropentameric ligand-gated chloride channel gated by gamma-aminobutyric acid (GABA), a major inhibitory neurotransmitter in the brain. GABA-gated chloride channels, also named GABA(A) receptors (GABAAR), consist of five subunits arranged around a central pore and contain GABA active binding site(s) located at the alpha and beta subunit interface(s). When activated by GABA, GABAARs selectively allow the flow of chloride anions across the cell membrane down their electrochemical gradient. Chloride influx into the postsynaptic neuron following GABAAR opening decreases the neuron ability to generate a new action potential, thereby reducing nerve transmission. GABAARs containing alpha-1 and beta-2 or -3 subunits exhibit synaptogenic activity; the gamma-2 subunit being necessary but not sufficient to induce rapid synaptic contacts formation. Extrasynaptic beta-2 receptors contribute to the tonic GABAergic inhibition. Beta-containing GABAARs can simultaneously bind GABA and histamine where histamine binds at the interface of two neighboring beta subunits, which may be involved in the regulation of sleep and wakefulness. In Mus musculus (Mouse), this protein is Gamma-aminobutyric acid receptor subunit beta-2.